The primary structure comprises 984 residues: Probable translation initiation factor IF-2 (984 aa).

The DOD-type homing endonuclease domain maps to 94–215; it reads VNGWYSVTVT…LPLLLLRFGI (122 aa). Residues 391 to 608 enclose the tr-type G domain; it reads TTETHNFVAN…LIAGLSQKYL (218 aa). Residues 464–468 and 518–521 contribute to the GTP site; these read DTPGH and NKID.

The protein belongs to the TRAFAC class translation factor GTPase superfamily. Classic translation factor GTPase family. IF-2 subfamily. In terms of processing, this protein undergoes a protein self splicing that involves a post-translational excision of the intervening region (intein) followed by peptide ligation.

Its function is as follows. Function in general translation initiation by promoting the binding of the formylmethionine-tRNA to ribosomes. Seems to function along with eIF-2. The polypeptide is Probable translation initiation factor IF-2 (infB) (Pyrococcus furiosus (strain ATCC 43587 / DSM 3638 / JCM 8422 / Vc1)).